A 1394-amino-acid polypeptide reads, in one-letter code: Leucine-rich PPR motif-containing protein, mitochondrial (1394 aa).

Residues 1–59 (MAALLRSARWLLRAGAAPRLPLSLRLLPGGPGRLHAASYLPAARAGPVAGGLLSPARLY) constitute a mitochondrion transit peptide. 8 PPR repeats span residues 126–160 (LLRSCGSLLPELKLEERTEFAHRIWDTLQKLGAVY), 161–195 (DVSHYNALLKVYLQNEYKFSPTDFLAKMEEANIQP), 196–230 (NRVTYQRLIASYCNVGDIEGASKILGFMKTKDLPV), 231–265 (TEAVFSALVTGHARAGDMENAENILTVMRDAGIEP), 266–300 (GPDTYLALLNAYAEKGDIDHVKQTLEKVEKSELHL), 301–335 (MDRDLLQIIFSFSKAGYPQYVSEILEKVTCERRYI), 403–437 (HSFPLQFTLHCALLANKTDLAKALMKAVKEEGFPI), and 438–472 (RPHYFWPLLVGRRKEKNVQGIIEILKGMQELGVHP). 3 positions are modified to N6-acetyllysine: K155, K187, and K226. Residue K292 is modified to N6-acetyllysine. N6-acetyllysine occurs at positions 463 and 613. 6 PPR repeats span residues 678–709 (IRDVLKQLILVLCSEENMQKALELKAKYESDM), 710–746 (VTGGYAALINLCCRHDKVEDALNLKEEFDRLDSSAVL), 747–784 (DTGKYVGLVRVLAKHGKLQDAINILKEMKEKDVLIKDT), 785–820 (TALSFFHMLNGAALRGEIETVKQLHEAIVTLGLAEP), 821–856 (STNISFPLVTVHLEKGDLSTALEVAIDCYEKYKVLP), and 954–988 (RDQMYYNLLKLYKINGDWQRADAVWNKIQEENVIP). Residues 712-1067 (GGYAALINLC…AKEQNIVFNA (356 aa)) are interaction with BECN1 and Aedes aegypti venom allergen-1. 2 positions are modified to N6-acetyllysine: K726 and K750. A phosphoserine mark is found at S1026, S1027, and S1029. PPR repeat units follow at residues 1031–1065 (TEPDFQKDILIACRLNQKKGAYDIFLNAKEQNIVF), 1066–1102 (NAETYSNLIKLLMSEDYFTQAMEVKAFAETHIKGFTL), 1103–1137 (NDAANSRLIITQVRRDYLKEAVTTLKTVLDQQQTP), 1138–1175 (SRLAVTRVIQALAMKGDVENIEVVQKMLNGLEDSIGLS), 1176–1210 (KMVFINNIALAQIKNNNIDAAIENIENMLTSENKV), and 1317–1351 (KEEAYNSLMKSYVSEKDVTSAKALYEHLTAKNTKL). The segment at 1121–1394 (KEAVTTLKTV…QLRKLRENSS (274 aa)) is RNA-binding. T1136 is subject to Phosphothreonine. Position 1138 is a phosphoserine (S1138).

As to quaternary structure, component of mRNP complexes associated with HNRPA1. Component of the complex, at least composed of LRPPRC, BECN1 and BCL2; the interactions prevent BECN1 from forming an autophagy-inducing complex with PIK3C3. Interacts with CECR2, HEBP2, MAP1S and UXT. Interacts with PPARGC1A. Interacts with FOXO1. Interacts (via N-terminus) with EIF4E; the interaction promotes association of EIF4E with 4ESE-containing mRNAs. Interacts with exportin XPO1/CRM1; interacts both alone and in complex with EIF4E and 4ESE-containing mRNAs to form an EIF4E-dependent mRNA export complex. Interacts with importin IPO8; the interaction occurs when LRPPRC is in its RNA-free form and returns LRPPRC to the nucleus for further export rounds. Interacts with BECN1. Interacts with Aedes aegypti venom allergen-1; the interaction interrupts BECN1 and LRPPRC association. As to expression, expressed ubiquitously. Expression is highest in heart, skeletal muscle, kidney and liver, intermediate in brain, non-mucosal colon, spleen and placenta, and lowest in small intestine, thymus, lung and peripheral blood leukocytes.

It localises to the mitochondrion. It is found in the nucleus. The protein resides in the nucleoplasm. The protein localises to the nucleus inner membrane. Its subcellular location is the nucleus outer membrane. In terms of biological role, may play a role in RNA metabolism in both nuclei and mitochondria. In the nucleus binds to HNRPA1-associated poly(A) mRNAs and is part of nmRNP complexes at late stages of mRNA maturation which are possibly associated with nuclear mRNA export. Positively modulates nuclear export of mRNAs containing the EIF4E sensitivity element (4ESE) by binding simultaneously to both EIF4E and the 4ESE and acting as a platform for assembly for the RNA export complex. Also binds to exportin XPO1/CRM1 to engage the nuclear pore and traffic the bound mRNAs to the cytoplasm. May bind mature mRNA in the nucleus outer membrane. In mitochondria binds to poly(A) mRNA. Plays a role in translation or stability of mitochondrially encoded cytochrome c oxidase (COX) subunits. May be involved in transcription regulation. Cooperates with PPARGC1A to regulate certain mitochondrially encoded genes and gluconeogenic genes and may regulate docking of PPARGC1A to transcription factors. Seems to be involved in the transcription regulation of the multidrug-related genes MDR1 and MVP. Part of a nuclear factor that binds to the invMED1 element of MDR1 and MVP gene promoters. Binds single-stranded DNA. Required for maintaining mitochondrial potential. Suppresses the initiation of basal levels of autophagy and mitophagy by sustaining BCL2 levels. The sequence is that of Leucine-rich PPR motif-containing protein, mitochondrial (LRPPRC) from Homo sapiens (Human).